The chain runs to 231 residues: Lipoprotein-releasing system ATP-binding protein LolD (231 aa).

Residues 6–230 (LSCKNVSKKY…DGELELVINS (225 aa)) enclose the ABC transporter domain. Residue 42–49 (GLSGSGKT) coordinates ATP.

It belongs to the ABC transporter superfamily. Lipoprotein translocase (TC 3.A.1.125) family. The complex is composed of two ATP-binding proteins (LolD) and two transmembrane proteins (LolC and LolE).

It is found in the cell inner membrane. Part of the ABC transporter complex LolCDE involved in the translocation of mature outer membrane-directed lipoproteins, from the inner membrane to the periplasmic chaperone, LolA. Responsible for the formation of the LolA-lipoprotein complex in an ATP-dependent manner. This is Lipoprotein-releasing system ATP-binding protein LolD from Francisella tularensis subsp. tularensis (strain FSC 198).